Reading from the N-terminus, the 258-residue chain is Regulatory protein RecX (258 aa).

This sequence belongs to the RecX family.

The protein localises to the cytoplasm. Modulates RecA activity. In Streptococcus equi subsp. equi (strain 4047), this protein is Regulatory protein RecX.